We begin with the raw amino-acid sequence, 386 residues long: NifS-like protein (386 aa).

Pyridoxal 5'-phosphate is bound by residues 58-59 (SE) and 184-186 (SIN).

The protein belongs to the class-V pyridoxal-phosphate-dependent aminotransferase family. NifS/IscS subfamily. It depends on pyridoxal 5'-phosphate as a cofactor.

Its subcellular location is the virion. The chain is NifS-like protein from Ornithodoros (relapsing fever ticks).